We begin with the raw amino-acid sequence, 183 residues long: MQKQVVVMDEAAIKRALTRVSYEIIERNKGTKDLALVGIKTRGIYLAERLHTRILEIEGMDVPVGDIDITLYRDDLSYKDDDTREPAVHGTNIPFDINGKKVVLVDDVLYTGRTVRAAMDALMDVGRPAQIHLAVLADRGHRELPIRADYVGKNIPTSANERVEVRLTDVDHAEDAVIINKNE.

The PRPP-binding signature appears at 102 to 114 (VVLVDDVLYTGRT).

This sequence belongs to the purine/pyrimidine phosphoribosyltransferase family. PyrR subfamily. In terms of assembly, homodimer and homohexamer; in equilibrium.

The catalysed reaction is UMP + diphosphate = 5-phospho-alpha-D-ribose 1-diphosphate + uracil. Functionally, regulates transcriptional attenuation of the pyrimidine nucleotide (pyr) operon by binding in a uridine-dependent manner to specific sites on pyr mRNA. This disrupts an antiterminator hairpin in the RNA and favors formation of a downstream transcription terminator, leading to a reduced expression of downstream genes. Its function is as follows. Also displays a weak uracil phosphoribosyltransferase activity which is not physiologically significant. The protein is Bifunctional protein PyrR of Listeria welshimeri serovar 6b (strain ATCC 35897 / DSM 20650 / CCUG 15529 / CIP 8149 / NCTC 11857 / SLCC 5334 / V8).